The sequence spans 63 residues: MLILTRRVGETLMVGDDVTVTVLGVKGNQVRIGVNAPKEVSVHREEIYMRIQAEKGGQPGSAE.

This sequence belongs to the CsrA/RsmA family. As to quaternary structure, homodimer; the beta-strands of each monomer intercalate to form a hydrophobic core, while the alpha-helices form wings that extend away from the core.

The protein resides in the cytoplasm. In terms of biological role, a key translational regulator that binds mRNA to regulate translation initiation and/or mRNA stability. Mediates global changes in gene expression, shifting from rapid growth to stress survival by linking envelope stress, the stringent response and the catabolite repression systems. Usually binds in the 5'-UTR; binding at or near the Shine-Dalgarno sequence prevents ribosome-binding, repressing translation, binding elsewhere in the 5'-UTR can activate translation and/or stabilize the mRNA. Its function is antagonized by small RNA(s). The sequence is that of Translational regulator CsrA from Alteromonas mediterranea (strain DSM 17117 / CIP 110805 / LMG 28347 / Deep ecotype).